We begin with the raw amino-acid sequence, 268 residues long: Interleukin-1 beta (268 aa).

Residues 1–116 constitute a propeptide that is removed on maturation; that stretch reads MAEVPELASE…TRNNDACVHD (116 aa).

Belongs to the IL-1 family. In terms of assembly, monomer. In its precursor form, weakly interacts with full-length MEFV; the mature cytokine does not interact at all. Interacts with integrins ITGAV:ITGBV and ITGA5:ITGB1; integrin-binding is required for IL1B signaling. Interacts with cargo receptor TMED10; the interaction is direct and is required for the secretion of IL1B mature form. Interacts with HSP90AB1; the interaction facilitates cargo translocation into the ERGIC. Interacts with HSP90B1; the interaction facilitates cargo translocation into the ERGIC.

It is found in the cytoplasm. The protein resides in the cytosol. Its subcellular location is the secreted. It localises to the lysosome. The protein localises to the extracellular exosome. Potent pro-inflammatory cytokine. Initially discovered as the major endogenous pyrogen, induces prostaglandin synthesis, neutrophil influx and activation, T-cell activation and cytokine production, B-cell activation and antibody production, and fibroblast proliferation and collagen production. Promotes Th17 differentiation of T-cells. Synergizes with IL12/interleukin-12 to induce IFNG synthesis from T-helper 1 (Th1) cells. Plays a role in angiogenesis by inducing VEGF production synergistically with TNF and IL6. Involved in transduction of inflammation downstream of pyroptosis: its mature form is specifically released in the extracellular milieu by passing through the gasdermin-D (GSDMD) pore. This chain is Interleukin-1 beta (IL1B), found in Macaca fascicularis (Crab-eating macaque).